The primary structure comprises 454 residues: Bifunctional protein GlmU (454 aa).

A pyrophosphorylase region spans residues 1-233; that stretch reads MTNRTCLAVI…RESAVGINNR (233 aa). UDP-N-acetyl-alpha-D-glucosamine is bound by residues 11 to 14, K25, Q79, and 84 to 85; these read LAAG and GT. D109 is a Mg(2+) binding site. UDP-N-acetyl-alpha-D-glucosamine contacts are provided by G145, E159, N174, and N231. N231 contributes to the Mg(2+) binding site. A linker region spans residues 234–254; the sequence is AELAEAEAVWQQKRRRELMLS. Residues 255 to 454 are N-acetyltransferase; sequence GVTLIAPETV…AEEKAKKSGG (200 aa). The UDP-N-acetyl-alpha-D-glucosamine site is built by R320 and K338. Catalysis depends on H350, which acts as the Proton acceptor. UDP-N-acetyl-alpha-D-glucosamine contacts are provided by Y353 and N364. Residues A367, 373-374, S410, and R427 contribute to the acetyl-CoA site; that span reads NY.

It in the N-terminal section; belongs to the N-acetylglucosamine-1-phosphate uridyltransferase family. The protein in the C-terminal section; belongs to the transferase hexapeptide repeat family. As to quaternary structure, homotrimer. Requires Mg(2+) as cofactor.

Its subcellular location is the cytoplasm. It carries out the reaction alpha-D-glucosamine 1-phosphate + acetyl-CoA = N-acetyl-alpha-D-glucosamine 1-phosphate + CoA + H(+). It catalyses the reaction N-acetyl-alpha-D-glucosamine 1-phosphate + UTP + H(+) = UDP-N-acetyl-alpha-D-glucosamine + diphosphate. It functions in the pathway nucleotide-sugar biosynthesis; UDP-N-acetyl-alpha-D-glucosamine biosynthesis; N-acetyl-alpha-D-glucosamine 1-phosphate from alpha-D-glucosamine 6-phosphate (route II): step 2/2. Its pathway is nucleotide-sugar biosynthesis; UDP-N-acetyl-alpha-D-glucosamine biosynthesis; UDP-N-acetyl-alpha-D-glucosamine from N-acetyl-alpha-D-glucosamine 1-phosphate: step 1/1. It participates in bacterial outer membrane biogenesis; LPS lipid A biosynthesis. Catalyzes the last two sequential reactions in the de novo biosynthetic pathway for UDP-N-acetylglucosamine (UDP-GlcNAc). The C-terminal domain catalyzes the transfer of acetyl group from acetyl coenzyme A to glucosamine-1-phosphate (GlcN-1-P) to produce N-acetylglucosamine-1-phosphate (GlcNAc-1-P), which is converted into UDP-GlcNAc by the transfer of uridine 5-monophosphate (from uridine 5-triphosphate), a reaction catalyzed by the N-terminal domain. This is Bifunctional protein GlmU from Chelativorans sp. (strain BNC1).